Consider the following 225-residue polypeptide: Putative elongation factor 1 gamma homolog (225 aa).

Residues 94-225 (DFKTRADILR…MCETEMQPIK (132 aa)) enclose the GST C-terminal domain.

The chain is Putative elongation factor 1 gamma homolog from Saccharomyces cerevisiae (strain ATCC 204508 / S288c) (Baker's yeast).